Reading from the N-terminus, the 302-residue chain is Tegument protein VP22 (302 aa).

Residues 1-10 (MASSDGDRLC) are compositionally biased toward basic and acidic residues. Disordered stretches follow at residues 1 to 42 (MASS…PDDS) and 125 to 170 (SFTK…SSWC). The interaction with gE stretch occupies residues 154–244 (RPISFSTAPK…ANEADLGEGA (91 aa)). Over residues 157-170 (SFSTAPKTATSSWC) the composition is skewed to polar residues. Positions 212 to 224 (LDRLLTGAVIRIT) match the Nuclear export signal motif. The tract at residues 243–302 (GASVSKRGHNRKTGDLQGGMGNEPMYAQVRKPKSRTDTQTTGRITNRSRARSASRTDTRK) is disordered.

This sequence belongs to the alphaherpesvirinae VP22 tegument protein family. Interacts with gE (via C-terminus); this interaction is necessary for the recruitment of VP22/ORF9 to the Golgi and its packaging into virions. Interacts with gM (via C-terminus). Interacts with VP16/ORF10; this interaction allows the formation of a tripartite complex composed of VP16/ORF10, VP22/ORF9 and VHS/ORF17. Interacts with the capsid-binding protein ORF44. Interacts with host CGAS. Highly phosphorylated in the host cell. Packaging is selective for underphosphorylated forms.

The protein resides in the virion tegument. It is found in the host cytoplasm. It localises to the host nucleus. Its subcellular location is the host Golgi apparatus. Tegument protein that plays different roles during the time course of infection. Participates in both the accumulation of viral mRNAs and viral protein translation at late time of infection. Modulates the RNase activity of the virion host shutoff protein ORF17 probably to ensure necessary levels of key cellular mRNAs and proteins. Plays a role in microtubule reorganization that occurs after viral infection by stabilizing microtubule network. Plays a role in the inhibition of host innate immune system by targeting the CGAS enzymatic activity which is the principal cytosolic DNA sensor that detects invading viral DNA. Acts by mediating disruption of liquid-like droplets in which CGAS is activated, thereby preventing CGAS activity. The chain is Tegument protein VP22 from Homo sapiens (Human).